A 263-amino-acid chain; its full sequence is MANKIDLKFKELKYKNKKAMIPFVTSGYPDVETTKKIVIEMEKSGADLIELGIPYSDPVADGPIIQISSSGALNNGLKIKDIMNMVKEVRKNVKIPIVYMGYFGCVFKYGLEKFIKDSKESGVDGIVIPDLPLEERERVKEIADRYEFYIIPLVAPTSEDRIGKIVNGAKGFIYCVSTNGVTGVRNIIANDVKAYIDVVSKASNVPKCIGFGISSPEMAQKMKEYCDGVIIGSAVMKIVEEDIPKEEMIRKVGEFISQVNEVL.

Active-site proton acceptor residues include glutamate 50 and aspartate 61.

It belongs to the TrpA family. Tetramer of two alpha and two beta chains.

It carries out the reaction (1S,2R)-1-C-(indol-3-yl)glycerol 3-phosphate + L-serine = D-glyceraldehyde 3-phosphate + L-tryptophan + H2O. Its pathway is amino-acid biosynthesis; L-tryptophan biosynthesis; L-tryptophan from chorismate: step 5/5. Its function is as follows. The alpha subunit is responsible for the aldol cleavage of indoleglycerol phosphate to indole and glyceraldehyde 3-phosphate. The polypeptide is Tryptophan synthase alpha chain (Clostridium acetobutylicum (strain ATCC 824 / DSM 792 / JCM 1419 / IAM 19013 / LMG 5710 / NBRC 13948 / NRRL B-527 / VKM B-1787 / 2291 / W)).